The primary structure comprises 118 residues: Large ribosomal subunit protein bL20 (118 aa).

Belongs to the bacterial ribosomal protein bL20 family.

Functionally, binds directly to 23S ribosomal RNA and is necessary for the in vitro assembly process of the 50S ribosomal subunit. It is not involved in the protein synthesizing functions of that subunit. This is Large ribosomal subunit protein bL20 from Azotobacter vinelandii.